The chain runs to 67 residues: Large ribosomal subunit protein eL24 (67 aa).

Positions 7, 10, 33, and 37 each coordinate Zn(2+). The C4-type zinc-finger motif lies at 7–37 (CDYCGTDIEPGTGTMFVHKDGATTHFCSSKC). Basic and acidic residues predominate over residues 48–60 (RNLEWTDTARGEA). Residues 48–67 (RNLEWTDTARGEAGEAEDEA) are disordered.

This sequence belongs to the eukaryotic ribosomal protein eL24 family. As to quaternary structure, part of the 50S ribosomal subunit. Forms a cluster with proteins L3 and L14. Requires Zn(2+) as cofactor.

Its function is as follows. Binds to the 23S rRNA. In Haloarcula marismortui (strain ATCC 43049 / DSM 3752 / JCM 8966 / VKM B-1809) (Halobacterium marismortui), this protein is Large ribosomal subunit protein eL24 (rpl24e).